The chain runs to 195 residues: MPKLGMQPIRRRQLIDATLDAINEVGMHDATIAQIARRAGVSTGIISHYFKDKNGLLEATMRDITSQLRDAVLNRLHALPDGSASQRLQAIVGGNFDETQISSAAMKAWLAFWASSMHQPMLYRLQQVSSRRLLSNLVYEFRRELPREQAQEAGYGLAALIDGLWLRAALSGKPLDKTLAQSLTSHFIRQHLPNP.

The HTH tetR-type domain maps to 8–68; that stretch reads PIRRRQLIDA…ATMRDITSQL (61 aa). The segment at residues 31–50 is a DNA-binding region (H-T-H motif); the sequence is TIAQIARRAGVSTGIISHYF.

Its pathway is amine and polyamine biosynthesis; betaine biosynthesis via choline pathway [regulation]. Repressor involved in the biosynthesis of the osmoprotectant glycine betaine. It represses transcription of the choline transporter BetT and the genes of BetAB involved in the synthesis of glycine betaine. In Klebsiella pneumoniae (strain 342), this protein is HTH-type transcriptional regulator BetI.